The chain runs to 294 residues: tRNA dimethylallyltransferase (294 aa).

ATP is bound at residue 7-14 (GPTGSGKS). 9-14 (TGSGKS) provides a ligand contact to substrate.

This sequence belongs to the IPP transferase family. As to quaternary structure, monomer. Mg(2+) is required as a cofactor.

The catalysed reaction is adenosine(37) in tRNA + dimethylallyl diphosphate = N(6)-dimethylallyladenosine(37) in tRNA + diphosphate. In terms of biological role, catalyzes the transfer of a dimethylallyl group onto the adenine at position 37 in tRNAs that read codons beginning with uridine, leading to the formation of N6-(dimethylallyl)adenosine (i(6)A). The protein is tRNA dimethylallyltransferase of Akkermansia muciniphila (strain ATCC BAA-835 / DSM 22959 / JCM 33894 / BCRC 81048 / CCUG 64013 / CIP 107961 / Muc).